Reading from the N-terminus, the 506-residue chain is Nondiscriminating glutamyl-tRNA synthetase EARS2, mitochondrial (506 aa).

The transit peptide at 1–41 (MAALLRRLLQRGRPLAASGRRVGRREARLGTGPGVAVRVRF) directs the protein to the mitochondrion. 40-42 (RFA) provides a ligand contact to L-glutamate. The 'HIGH' region signature appears at 45–53 (PTGFLHLGG). His50 contacts ATP. L-glutamate contacts are provided by residues Glu76, 228–232 (YHLAC), and Arg246. Glu249 contacts ATP. Position 256 is an N6-succinyllysine (Lys256). Residue 284–288 (KLSKR) coordinates ATP. The 'KMSKS' region motif lies at 284 to 288 (KLSKR). Lys486 bears the N6-acetyllysine mark.

It belongs to the class-I aminoacyl-tRNA synthetase family. Glutamate--tRNA ligase type 1 subfamily.

Its subcellular location is the mitochondrion matrix. It carries out the reaction tRNA(Glx) + L-glutamate + ATP = L-glutamyl-tRNA(Glx) + AMP + diphosphate. The catalysed reaction is tRNA(Glu) + L-glutamate + ATP = L-glutamyl-tRNA(Glu) + AMP + diphosphate. The enzyme catalyses tRNA(Gln) + L-glutamate + ATP = L-glutamyl-tRNA(Gln) + AMP + diphosphate. Non-discriminating glutamyl-tRNA synthetase that catalyzes aminoacylation of both mitochondrial tRNA(Glu) and tRNA(Gln) and participates in RNA aminoacylation for mitochondrial protein translation. Attachs glutamate to tRNA(Glu) or tRNA(Gln) in a two-step reaction: glutamate is first activated by ATP to form Glu-AMP and then transferred to the acceptor end of tRNA(Glu) or tRNA(Gln). In vitro, cytoplasmic tRNA(Gln) is slightly glutamylated, but with low activity. This chain is Nondiscriminating glutamyl-tRNA synthetase EARS2, mitochondrial, found in Macaca fascicularis (Crab-eating macaque).